We begin with the raw amino-acid sequence, 181 residues long: Malignant T-cell-amplified sequence 1-B (181 aa).

Residues leucine 92–asparagine 171 enclose the PUA domain.

Belongs to the MCTS1 family.

The protein resides in the cytoplasm. Its function is as follows. Plays a role as translation enhancer and involved in cell cycle regulation. This Xenopus laevis (African clawed frog) protein is Malignant T-cell-amplified sequence 1-B (mcts1-b).